The primary structure comprises 732 residues: MERQVLLSEPQEAAALYRGLSRQPSLSAACLGPEVTTQYGGLYRTVHTEWTQRDLERMENIRFCRQYLVFHDGDSVVFAGPAGNSVETRGELLSRESPSGTMKAVLRKAGGTVSGEEKQFLEVWEKNRKLKSFNLSALEKHGPVYEDDCFGCLSWSHSETHLLYVAEKKRPKAESFFQTKALDISASDDEMARPKKPDQAIKGDQFVFYEDWGETMVSKSIPVLCVLDIDSGNISVLEGVPENVSPGQAFWAPGDTGVVFVGWWHEPFRLGIRYCTNRRSALYYVDLSGGKCELLSDGSLAICSPRLSPDQCRIVYLQYPCLAPHHQCSQLCLYDWYTKVTSVVVDIVPRQLGESFSGIYCSLLPLGCWSADSQRVVFDSAQRSRQDLFAVDTQTGSITSLTAAGSAGSWKLLTIDKDLMVAQFSTPSLPPSLKVGFLPPPGKEQSVSWVSLEEAEPIPGIHWGVRVLHPPPDQENVQYADLDFEAILLQPSNPPDKTQVPMVVMPHGGPHSSFVTAWMLFPAMLCKMGFAVLLVNYRGSTGFGQDSILSLPGNVGHQDVKDVQFAVEQVLQEEHFDARRVALMGGSHGGFLSCHLIGQYPETYSACIARNPVINIASMMGSTDIPDWCMVETGFPYSNSCLPDLNVWEEMLDKSPIKYIPQVKTPVLLMLGQEDRRVPFKQGMEYYRALKARNVPVRLLLYPKSNHALSEVEAESDSFMNAVLWLHTHLGS.

Residue M1 is modified to Blocked amino end (Met); alternate. An N-acetylmethionine; alternate modification is found at M1. Phosphoserine occurs at positions 185 and 187. Catalysis depends on charge relay system residues S587, D675, and H707.

This sequence belongs to the peptidase S9C family. Homotetramer.

The protein localises to the cytoplasm. It carries out the reaction Cleavage of an N-acetyl or N-formyl amino acid from the N-terminus of a polypeptide.. Homotetramerization is required for activity. Tetramerization results in the formation of a gated channel which is involved in substrate selection and substrate access to the catalytic sites. Functionally, this enzyme catalyzes the hydrolysis of the N-terminal peptide bond of an N-acetylated peptide to generate an N-acetylated amino acid and a peptide with a free N-terminus. It preferentially cleaves off Ac-Ala, Ac-Met and Ac-Ser. Also, involved in the degradation of oxidized and glycated proteins. The protein is Acylamino-acid-releasing enzyme (Apeh) of Rattus norvegicus (Rat).